The sequence spans 504 residues: Anaerobic nitric oxide reductase transcription regulator NorR (504 aa).

Asp57 bears the 4-aspartylphosphate mark. One can recognise a Sigma-54 factor interaction domain in the interval 187-416 (MIGLSPGMTQ…LEHAIHRAVV (230 aa)). ATP-binding positions include 215 to 222 (GETGTGKE) and 278 to 287 (ADNGTLFLDE). The segment at residues 479–498 (WAACARMLETDVANLHRLAK) is a DNA-binding region (H-T-H motif).

Its pathway is nitrogen metabolism; nitric oxide reduction. In terms of biological role, required for the expression of anaerobic nitric oxide (NO) reductase, acts as a transcriptional activator for at least the norVW operon. Activation also requires sigma-54. This chain is Anaerobic nitric oxide reductase transcription regulator NorR, found in Escherichia coli O127:H6 (strain E2348/69 / EPEC).